The primary structure comprises 694 residues: Elongation factor G 2 (694 aa).

The region spanning 5-280 (SKYRNIGIFA…AVVDYLPSPT (276 aa)) is the tr-type G domain. Residues 14–21 (AHVDAGKT), 78–82 (DTPGH), and 132–135 (NKLD) contribute to the GTP site.

It belongs to the TRAFAC class translation factor GTPase superfamily. Classic translation factor GTPase family. EF-G/EF-2 subfamily.

Its subcellular location is the cytoplasm. In terms of biological role, catalyzes the GTP-dependent ribosomal translocation step during translation elongation. During this step, the ribosome changes from the pre-translocational (PRE) to the post-translocational (POST) state as the newly formed A-site-bound peptidyl-tRNA and P-site-bound deacylated tRNA move to the P and E sites, respectively. Catalyzes the coordinated movement of the two tRNA molecules, the mRNA and conformational changes in the ribosome. This Pseudoalteromonas translucida (strain TAC 125) protein is Elongation factor G 2.